Consider the following 90-residue polypeptide: Elongation factor 1-beta (90 aa).

The protein belongs to the EF-1-beta/EF-1-delta family.

Its function is as follows. Promotes the exchange of GDP for GTP in EF-1-alpha/GDP, thus allowing the regeneration of EF-1-alpha/GTP that could then be used to form the ternary complex EF-1-alpha/GTP/AAtRNA. The sequence is that of Elongation factor 1-beta from Sulfolobus acidocaldarius (strain ATCC 33909 / DSM 639 / JCM 8929 / NBRC 15157 / NCIMB 11770).